Consider the following 867-residue polypeptide: Glucans biosynthesis glucosyltransferase H (867 aa).

Residues 71-91 (DDEGRTQLETMPKATRSSISP) are disordered. Helical transmembrane passes span 139–156 (YILL…TWYM), 194–216 (ILIL…LMGF), 518–540 (VMSY…LQVV), 568–590 (IALL…LLIW), 603–625 (VTIS…MLFH), and 680–702 (FLFW…VFSS).

This sequence belongs to the glycosyltransferase 2 family. OpgH subfamily.

It is found in the cell inner membrane. The protein operates within glycan metabolism; osmoregulated periplasmic glucan (OPG) biosynthesis. Its function is as follows. Involved in the biosynthesis of osmoregulated periplasmic glucans (OPGs). The sequence is that of Glucans biosynthesis glucosyltransferase H from Nitrosomonas europaea (strain ATCC 19718 / CIP 103999 / KCTC 2705 / NBRC 14298).